The following is a 348-amino-acid chain: Dihydroorotase (348 aa).

Residues His-17 and His-19 each coordinate Zn(2+). Substrate is bound by residues 19–21 (HLR) and Asn-45. Residues Lys-103, His-140, and His-178 each contribute to the Zn(2+) site. Lys-103 is modified (N6-carboxylysine). His-140 lines the substrate pocket. Leu-223 lines the substrate pocket. Residue Asp-251 participates in Zn(2+) binding. Residue Asp-251 is part of the active site. Residues His-255 and Ala-267 each coordinate substrate.

It belongs to the metallo-dependent hydrolases superfamily. DHOase family. Class II DHOase subfamily. Homodimer. Requires Zn(2+) as cofactor.

It catalyses the reaction (S)-dihydroorotate + H2O = N-carbamoyl-L-aspartate + H(+). It functions in the pathway pyrimidine metabolism; UMP biosynthesis via de novo pathway; (S)-dihydroorotate from bicarbonate: step 3/3. Its function is as follows. Catalyzes the reversible cyclization of carbamoyl aspartate to dihydroorotate. The polypeptide is Dihydroorotase (Escherichia fergusonii (strain ATCC 35469 / DSM 13698 / CCUG 18766 / IAM 14443 / JCM 21226 / LMG 7866 / NBRC 102419 / NCTC 12128 / CDC 0568-73)).